Reading from the N-terminus, the 428-residue chain is Histidinol dehydrogenase (428 aa).

Residues Tyr-124, Gln-186, and Asn-209 each contribute to the NAD(+) site. Substrate-binding residues include Ser-233, Gln-255, and His-258. Residues Gln-255 and His-258 each coordinate Zn(2+). Residues Glu-322 and His-323 each act as proton acceptor in the active site. Residues His-323, Asp-356, Glu-410, and His-415 each contribute to the substrate site. Position 356 (Asp-356) interacts with Zn(2+). Residue His-415 coordinates Zn(2+).

The protein belongs to the histidinol dehydrogenase family. The cofactor is Zn(2+).

It carries out the reaction L-histidinol + 2 NAD(+) + H2O = L-histidine + 2 NADH + 3 H(+). The protein operates within amino-acid biosynthesis; L-histidine biosynthesis; L-histidine from 5-phospho-alpha-D-ribose 1-diphosphate: step 9/9. Its function is as follows. Catalyzes the sequential NAD-dependent oxidations of L-histidinol to L-histidinaldehyde and then to L-histidine. The chain is Histidinol dehydrogenase from Bacteroides fragilis (strain ATCC 25285 / DSM 2151 / CCUG 4856 / JCM 11019 / LMG 10263 / NCTC 9343 / Onslow / VPI 2553 / EN-2).